A 1154-amino-acid chain; its full sequence is ATP-dependent helicase/deoxyribonuclease subunit B (1154 aa).

Positions 1 to 284 (MSVRFIIGRS…EQLRHNVRHK (284 aa)) constitute a UvrD-like helicase ATP-binding domain. 8-15 (GRSGSGKT) lines the ATP pocket. A UvrD-like helicase C-terminal domain is found at 279–583 (HNVRHKHEEL…QFSLVPPATD (305 aa)). Residues C799, C1120, C1123, and C1129 each contribute to the [4Fe-4S] cluster site.

This sequence belongs to the helicase family. AddB/RexB type 1 subfamily. In terms of assembly, heterodimer of AddA and AddB. Mg(2+) serves as cofactor. It depends on [4Fe-4S] cluster as a cofactor.

Its function is as follows. The heterodimer acts as both an ATP-dependent DNA helicase and an ATP-dependent, dual-direction single-stranded exonuclease. Recognizes the chi site generating a DNA molecule suitable for the initiation of homologous recombination. The AddB subunit has 5' -&gt; 3' nuclease activity but not helicase activity. This is ATP-dependent helicase/deoxyribonuclease subunit B from Anoxybacillus flavithermus (strain DSM 21510 / WK1).